The sequence spans 433 residues: Probable D-serine dehydratase (433 aa).

K110 is modified (N6-(pyridoxal phosphate)lysine).

It belongs to the serine/threonine dehydratase family. DsdA subfamily. It depends on pyridoxal 5'-phosphate as a cofactor.

The enzyme catalyses D-serine = pyruvate + NH4(+). This chain is Probable D-serine dehydratase, found in Oenococcus oeni (strain ATCC BAA-331 / PSU-1).